The chain runs to 285 residues: uncharacterized protein (285 aa).

Mn(2+) is bound by residues H110, D131, H133, D135, D214, and D216.

This sequence belongs to the arginase family. The cofactor is Mn(2+).

This is an uncharacterized protein from Methanothermus fervidus.